The following is a 177-amino-acid chain: NADH-quinone oxidoreductase subunit E (177 aa).

[2Fe-2S] cluster is bound by residues cysteine 93, cysteine 98, cysteine 134, and cysteine 138.

This sequence belongs to the complex I 24 kDa subunit family. [2Fe-2S] cluster serves as cofactor.

It carries out the reaction a quinone + NADH + 5 H(+)(in) = a quinol + NAD(+) + 4 H(+)(out). Its function is as follows. NDH-1 shuttles electrons from NADH, via FMN and iron-sulfur (Fe-S) centers, to quinones in the respiratory chain. Couples the redox reaction to proton translocation (for every two electrons transferred, four hydrogen ions are translocated across the cytoplasmic membrane), and thus conserves the redox energy in a proton gradient. This is NADH-quinone oxidoreductase subunit E (nuoE) from Rickettsia prowazekii (strain Madrid E).